The primary structure comprises 110 residues: uncharacterized protein (110 aa).

It belongs to the RuBisCO large chain family.

It localises to the mitochondrion. This is an uncharacterized protein from Arabidopsis thaliana (Mouse-ear cress).